Reading from the N-terminus, the 416-residue chain is Orexin/Hypocretin receptor type 1 (416 aa).

A disordered region spans residues 1 to 22 (MEPSATPGAQPGVPTSSGEPFH). Topologically, residues 1 to 46 (MEPSATPGAQPGVPTSSGEPFHLPPDYEDEFLRYLWRDYLYPKQYE) are extracellular. A required for response to orexin-A region spans residues 26-41 (DYEDEFLRYLWRDYLY). Residues 47 to 67 (WVLIAAYVAVFLIALVGNTLV) traverse the membrane as a helical segment. Topologically, residues 68-82 (CLAVWRNHHMRTVTN) are cytoplasmic. Residues 83 to 105 (YFIVNLSLADVLVTAICLPASLL) form a helical membrane-spanning segment. Over 106-119 (VDITESWLFGHALC) the chain is Extracellular. Cys-119 and Cys-202 form a disulfide bridge. The helical transmembrane segment at 120–140 (KVIPYLQAVSVSVAVLTLSFI) threads the bilayer. Residues 141–160 (ALDRWYAICHPLLFKSTARR) are Cytoplasmic-facing. Residues 161-182 (ARGSILGIWAVSLAVMVPQAAV) form a helical membrane-spanning segment. Residues 183-213 (MECSSVLPELANRTRLFSVCDERWADELYPK) lie on the Extracellular side of the membrane. Asn-194 is a glycosylation site (N-linked (GlcNAc...) asparagine). The helical transmembrane segment at 214–235 (IYHSCFFFVTYLAPLGLMGMAY) threads the bilayer. At 236-298 (FQIFRKLWGP…QMRARRKTAK (63 aa)) the chain is on the cytoplasmic side. A helical transmembrane segment spans residues 299–321 (MLMVVLLVFALCYLPISVLNVLK). Over 322–336 (RVFGMFRQASDREAV) the chain is Extracellular. A helical transmembrane segment spans residues 337-360 (YACFTFSHWLVYANSAANPIIYNF). The Cytoplasmic segment spans residues 361–416 (LSGKFREQFKAAFSCCLPGLGPSSSARHKSLSLQSRCSVSKVSEHVVLTTVTTVLS).

It belongs to the G-protein coupled receptor 1 family. In terms of tissue distribution, highly expressed in the brain in the prefrontal cortex, hippocampus, paraventricular thalamus, ventromedial hypothalamus, arcuate nucleus, dorsal raphe nucleus, and locus coeruleus. Not detected in the spleen, lung, liver, skeletal muscle, kidney and testis. Orexin receptor mRNA expression has also been reported in the adrenal gland, enteric nervous system, and pancreas.

Its subcellular location is the cell membrane. Functionally, moderately selective excitatory receptor for orexin-A and, with a lower affinity, for orexin-B neuropeptide. Triggers an increase in cytoplasmic Ca(2+) levels in response to orexin-A binding. This is Orexin/Hypocretin receptor type 1 from Rattus norvegicus (Rat).